The primary structure comprises 407 residues: Argininosuccinate synthase (407 aa).

Residues 10-18 and Ala-37 each bind ATP; that span reads AYSGGLDTS. L-citrulline-binding residues include Tyr-88 and Ser-93. An ATP-binding site is contributed by Gly-118. Residues Thr-120, Asn-124, and Asp-125 each coordinate L-aspartate. Asn-124 serves as a coordination point for L-citrulline. L-citrulline-binding residues include Arg-128, Ser-180, Ser-189, Glu-265, and Tyr-277.

Belongs to the argininosuccinate synthase family. Type 1 subfamily. In terms of assembly, homotetramer.

It is found in the cytoplasm. The enzyme catalyses L-citrulline + L-aspartate + ATP = 2-(N(omega)-L-arginino)succinate + AMP + diphosphate + H(+). It functions in the pathway amino-acid biosynthesis; L-arginine biosynthesis; L-arginine from L-ornithine and carbamoyl phosphate: step 2/3. The protein is Argininosuccinate synthase of Alcanivorax borkumensis (strain ATCC 700651 / DSM 11573 / NCIMB 13689 / SK2).